Here is a 557-residue protein sequence, read N- to C-terminus: Membrane protein insertase YidC (557 aa).

3 consecutive transmembrane segments (helical) span residues 371–391, 437–457, and 515–535; these read WGWS…PLSA, LGGC…YWVL, and PIVF…YWVV.

It belongs to the OXA1/ALB3/YidC family. Type 1 subfamily. Interacts with the Sec translocase complex via SecD. Specifically interacts with transmembrane segments of nascent integral membrane proteins during membrane integration.

The protein resides in the cell inner membrane. Required for the insertion and/or proper folding and/or complex formation of integral membrane proteins into the membrane. Involved in integration of membrane proteins that insert both dependently and independently of the Sec translocase complex, as well as at least some lipoproteins. Aids folding of multispanning membrane proteins. The chain is Membrane protein insertase YidC from Polynucleobacter necessarius subsp. necessarius (strain STIR1).